Here is a 120-residue protein sequence, read N- to C-terminus: NAD(P)H-quinone oxidoreductase subunit 3, chloroplastic (120 aa).

Helical transmembrane passes span 9–29 (IFWA…IISG), 60–80 (ICYY…VFLY), and 88–108 (ILGV…IVGS).

It belongs to the complex I subunit 3 family. In terms of assembly, NDH is composed of at least 16 different subunits, 5 of which are encoded in the nucleus.

The protein localises to the plastid. It is found in the chloroplast thylakoid membrane. The catalysed reaction is a plastoquinone + NADH + (n+1) H(+)(in) = a plastoquinol + NAD(+) + n H(+)(out). It catalyses the reaction a plastoquinone + NADPH + (n+1) H(+)(in) = a plastoquinol + NADP(+) + n H(+)(out). Its function is as follows. NDH shuttles electrons from NAD(P)H:plastoquinone, via FMN and iron-sulfur (Fe-S) centers, to quinones in the photosynthetic chain and possibly in a chloroplast respiratory chain. The immediate electron acceptor for the enzyme in this species is believed to be plastoquinone. Couples the redox reaction to proton translocation, and thus conserves the redox energy in a proton gradient. This chain is NAD(P)H-quinone oxidoreductase subunit 3, chloroplastic, found in Morus indica (Mulberry).